The sequence spans 176 residues: Peptidyl-prolyl cis-trans isomerase CYP19-3 (176 aa).

Residues 7–170 (FFDILIGKMK…ERVVIEDCGE (164 aa)) enclose the PPIase cyclophilin-type domain.

This sequence belongs to the cyclophilin-type PPIase family. As to expression, ubiquitous, with highest levels in flowers and lowest levels in roots.

It is found in the cytoplasm. It catalyses the reaction [protein]-peptidylproline (omega=180) = [protein]-peptidylproline (omega=0). Its activity is regulated as follows. Binds cyclosporin A (CsA). CsA mediates some of its effects via an inhibitory action on PPIase. PPIases accelerate the folding of proteins. It catalyzes the cis-trans isomerization of proline imidic peptide bonds in oligopeptides. The protein is Peptidyl-prolyl cis-trans isomerase CYP19-3 (CYP19-3) of Arabidopsis thaliana (Mouse-ear cress).